The following is a 666-amino-acid chain: ESX-1 secretion-associated protein EspI (666 aa).

Residues 1-15 (MAADYDKLFRPHEGM) are compositionally biased toward basic and acidic residues. Residues 1-378 (MAADYDKLFR…ATKPPKVVSQ (378 aa)) form a disordered region. The span at 22–31 (AAQPFFDPSA) shows a compositional bias: low complexity. Pro residues-rich tracts occupy residues 64 to 80 (APPPPPPPPPPPPPTPM), 87 to 144 (PPSP…PAPT), and 188 to 205 (PAPPWAKMPIGEPPPAPS). Residues 222-231 (HSRRARRGHR) show a composition bias toward basic residues. A compositionally biased stretch (pro residues) spans 284-297 (PTRPAPTEPPPSPS). A compositionally biased stretch (basic residues) spans 357 to 371 (PKVKKVKPQKPKATK). 424-431 (LKGGAGKT) provides a ligand contact to ATP.

Required to repress ESX-1-mediated secretion under low ATP conditions. This function requires the ATP-binding motif. The chain is ESX-1 secretion-associated protein EspI from Mycobacterium tuberculosis (strain CDC 1551 / Oshkosh).